The primary structure comprises 30 residues: Beta/omega-theraphotoxin-Tp2a (30 aa).

Intrachain disulfides connect cysteine 2–cysteine 16, cysteine 9–cysteine 21, and cysteine 15–cysteine 25. The segment at 26–30 (KKKLW) is flexible tail region important for ability to inhibit Nav channel. Positions 29–30 (LW) are hydrophobic dyad that anchors the toxin into the membrane while positioning it over the S3 helix of Nav1.7/SCN9A.

The protein belongs to the neurotoxin 30 (phrixotoxin) family. In terms of tissue distribution, expressed by the venom gland.

It is found in the secreted. Its function is as follows. Gating-modifier toxin that targets voltage-gated sodium channels with a selective activity on Nav1.7/SCN9A (IC(50)=1-1.5 nM). It inhibits both activation and inactivation. For inhibition of activation, it is 100-fold more selective for Nav1.7/SCN9A (IC(50)=0.26-3) than for other sodium channels (Nav1.2/SCN2A (IC(50)=40-540 nM), Nav1.3/SCN3A (IC(50)=102 nM), Nav1.4/SCN4A (IC(50)=30-39 nM), Nav1.5/SCN5A (IC(50)=19-90 nM), Nav1.6/SCN8A (IC(50)=26 nM), and Nav1.8/SCN10A (IC(50)=146 nM)). For inhibition of inactivation, it is 20-fold more potent in inhibiting inactivation on Nav1.7/SCN9A (IC(50)=250 nM) than other channels (about 4.6 uM for all channels). It also weakly inhibits Cav1.2/CACNA1C and Cav3.2/CACNA1H (29% block at 1 uM). It inhibits Nav1.7/SCN9A activation by interacting with DII and impairs Nav1.7/SCN9A inactivation by interacting with DIV. It docks on top of the DII S3 helix Nav1.7/SCN9A. It is about 60-fold less active on Nav1.7/SCN9A at depolarized potential (0 mV; IC(50)=15 nM), compared to -120 mV potential (IC(50)=0.26 nM). This toxin binds to lipid membrane. This ability correlates with hNav1.7/SCN9A inhibition, showing that membrane binding is the first step in the inhibitory mechanism of this toxin. It inhibits Nav1.2/SCN2A less potently when it is coexpressed with SCN2B or SCN4B than when it is expressed alone, showing that beta subunits (SCN2B and SCN4B) have a protective effect. In Thrixopelma pruriens (Peruvian green velvet tarantula), this protein is Beta/omega-theraphotoxin-Tp2a.